We begin with the raw amino-acid sequence, 91 residues long: DNA/RNA-binding protein Alba (91 aa).

This sequence belongs to the histone-like Alba family.

Its subcellular location is the cytoplasm. The protein resides in the chromosome. In terms of biological role, binds double-stranded DNA tightly but without sequence specificity. Involved in DNA compaction. The sequence is that of DNA/RNA-binding protein Alba from Methanoculleus marisnigri (strain ATCC 35101 / DSM 1498 / JR1).